Here is a 423-residue protein sequence, read N- to C-terminus: Core protease OPG083 (423 aa).

Active-site residues include His241, Asp248, and Cys328.

It belongs to the peptidase C57 family.

It localises to the virion. Its function is as follows. Late protein responsible for processing most or all of the viral core and membrane proteins known to undergo morphogenesis-associated proteolysis. These proteolytic events are involved in the transformation of immature virions (IV) into mature virions (MV). Probably cleaves at least the OPG129/A3, OPG136/A10, OPG098/L4, and OPG144/A17 precursors preferentially at Ala-Gly-|-Ala motifs. Also seems to process Ala-Gly-|-Ser and Ala-Gly-|-Thr motifs. The protein is Core protease OPG083 (OPG083) of Bos taurus (Bovine).